The chain runs to 388 residues: Mannitol-1-phosphate 5-dehydrogenase (388 aa).

NAD(+) is bound at residue 5–16; sequence AIQFGGGNIGRG. Lysine 213 is a catalytic residue.

This sequence belongs to the mannitol dehydrogenase family. Monomer.

The enzyme catalyses D-mannitol 1-phosphate + NAD(+) = beta-D-fructose 6-phosphate + NADH + H(+). Catalyzes the NAD(H)-dependent interconversion of D-fructose 6-phosphate and D-mannitol 1-phosphate in the mannitol metabolic pathway. Has a strong preference for NADH over NADPH. Required for protection of conidiospores against exogenous stresses such as high temperatures and an oxidative environment. The chain is Mannitol-1-phosphate 5-dehydrogenase (mpdA) from Aspergillus niger.